The primary structure comprises 455 residues: MISVFDIFKIGIGPSSSHTVGPMKAGKQFTDDLIARNLLKDVTRVVVDVYGSLSLTGKGHHTDIAIIMGLAGNLPDTVDIDSIPSFIQDVNTHGRLMLANGQHEVEFPVDQCMNFHADNLSLHENGMRITALAGDKVVYSQTYYSIGGGFIVDEEHFGQQDSAPVEVPYPYSSAADLQKHCQETGLSLSGLMMKNELALHSKEELEQHLANVWEVMRGGIERGISTEGVLPGKLRVPRRAAALRRMLVSQDKTTTDPMAVVDWINMFALAVNEENAAGGRVVTAPTNGACGIIPAVLAYYDKFIREVNANSLARYLLVASAIGSLYKMNASISGAEVGCQGEVGVACSMAAAGLAELLGASPAQVCIAAEIAMEHNLGLTCDPVAGQVQVPCIERNAIAAVKAVNAARMALRRTSEPRVCLDKVIETMYETGKDMNAKYRETSRGGLAMKIVACD.

The protein belongs to the iron-sulfur dependent L-serine dehydratase family. Requires [4Fe-4S] cluster as cofactor. Post-translationally, activated by post-translational modification by a system involving at least three gene products. Activation is mimicked in vitro by iron and dithiothreitol. There is considerable evidence for a free-radical activation mechanism.

The enzyme catalyses L-serine = pyruvate + NH4(+). It functions in the pathway carbohydrate biosynthesis; gluconeogenesis. Also deaminates threonine, particularly when it is present in high concentration. The polypeptide is L-serine dehydratase 2 (sdaB) (Escherichia coli (strain K12)).